The sequence spans 386 residues: Ribosomal RNA small subunit methyltransferase H (386 aa).

S-adenosyl-L-methionine contacts are provided by residues 97–99 (GGH), D116, Y143, D167, and Q174.

Belongs to the methyltransferase superfamily. RsmH family.

The protein resides in the cytoplasm. It carries out the reaction cytidine(1402) in 16S rRNA + S-adenosyl-L-methionine = N(4)-methylcytidine(1402) in 16S rRNA + S-adenosyl-L-homocysteine + H(+). Functionally, specifically methylates the N4 position of cytidine in position 1402 (C1402) of 16S rRNA. In Mycolicibacterium paratuberculosis (strain ATCC BAA-968 / K-10) (Mycobacterium paratuberculosis), this protein is Ribosomal RNA small subunit methyltransferase H.